A 248-amino-acid chain; its full sequence is 26.2 kDa heat shock protein, mitochondrial (248 aa).

The N-terminal 32 residues, 1 to 32, are a transit peptide targeting the mitochondrion; that stretch reads MASTVALKGRPLATLLRQLLAADAPPAATGRP. A disordered region spans residues 26-48; that stretch reads PAATGRPVAAAPAASGKPVTAPA. The sHSP domain maps to 139–248; it reads ATAAARRGGW…RKDVFQVNVE (110 aa).

The protein belongs to the small heat shock protein (HSP20) family. As to quaternary structure, may form oligomeric structures.

It is found in the mitochondrion. In Oryza sativa subsp. japonica (Rice), this protein is 26.2 kDa heat shock protein, mitochondrial (HSP26.2).